An 837-amino-acid chain; its full sequence is Cap-specific mRNA (nucleoside-2'-O-)-methyltransferase 1 (837 aa).

The tract at residues M1–F66 is disordered. The short motif at K2–R18 is the Bipartite nuclear localization signal element. Phosphoserine is present on residues S27, S30, and S52. Positions T56–F66 are enriched in basic and acidic residues. In terms of domain architecture, G-patch spans Y86 to Q132. S90 is subject to Phosphoserine. K107 carries the post-translational modification N6-acetyllysine. Residues K202–D206 and R217 contribute to the substrate site. A RrmJ-type SAM-dependent 2'-O-MTase domain is found at F230 to K449. Residue N233 participates in S-adenosyl-L-methionine binding. K238 is a catalytic residue. S-adenosyl-L-methionine-binding positions include C276–F282 and D334–I335. Residue D363 is part of the active site. N373 to Q375 lines the substrate pocket. K403 (proton acceptor) is an active-site residue. Position 438 (N438) interacts with substrate. The interaction with POLR2A stretch occupies residues S726 to P834. The region spanning R751–E785 is the WW domain.

In terms of assembly, interacts with POLR2A (via C-terminus).

It is found in the nucleus. The catalysed reaction is a 5'-end (N(7)-methyl 5'-triphosphoguanosine)-ribonucleoside in mRNA + S-adenosyl-L-methionine = a 5'-end (N(7)-methyl 5'-triphosphoguanosine)-(2'-O-methyl-ribonucleoside) in mRNA + S-adenosyl-L-homocysteine + H(+). S-adenosyl-L-methionine-dependent methyltransferase that mediates mRNA cap1 2'-O-ribose methylation to the 5'-cap structure of mRNAs. Methylates the ribose of the first nucleotide of a m(7)GpppG-capped mRNA and small nuclear RNA (snRNA) to produce m(7)GpppRm (cap1). Displays a preference for cap0 transcripts. Cap1 modification is linked to higher levels of translation. May be involved in the interferon response pathway. The polypeptide is Cap-specific mRNA (nucleoside-2'-O-)-methyltransferase 1 (Cmtr1) (Mus musculus (Mouse)).